We begin with the raw amino-acid sequence, 78 residues long: Acyl carrier protein (78 aa).

Residues 2–77 (SNFEERVKKI…AAIDYVVSSA (76 aa)) enclose the Carrier domain. At S37 the chain carries O-(pantetheine 4'-phosphoryl)serine.

This sequence belongs to the acyl carrier protein (ACP) family. 4'-phosphopantetheine is transferred from CoA to a specific serine of apo-ACP by AcpS. This modification is essential for activity because fatty acids are bound in thioester linkage to the sulfhydryl of the prosthetic group.

The protein localises to the cytoplasm. The protein operates within lipid metabolism; fatty acid biosynthesis. Its function is as follows. Carrier of the growing fatty acid chain in fatty acid biosynthesis. Is probably involved in the biosynthesis of docosahexaenoic acid (DHA) which is produced by this bacterium as a fatty acyl component in its membrane lipid. The polypeptide is Acyl carrier protein (Moritella marina (Vibrio marinus)).